The primary structure comprises 31 residues: Cytochrome b6-f complex subunit 8 (31 aa).

The helical transmembrane segment at 5–25 threads the bilayer; sequence IVSMAWAALMVVFTFSLSLVI.

Belongs to the PetN family. The 4 large subunits of the cytochrome b6-f complex are cytochrome b6, subunit IV (17 kDa polypeptide, PetD), cytochrome f and the Rieske protein, while the 4 small subunits are PetG, PetL, PetM and PetN. The complex functions as a dimer.

Its subcellular location is the plastid membrane. In terms of biological role, component of the cytochrome b6-f complex, which mediates electron transfer between photosystem II (PSII) and photosystem I (PSI), cyclic electron flow around PSI, and state transitions. In Cuscuta gronovii (Common dodder), this protein is Cytochrome b6-f complex subunit 8.